Reading from the N-terminus, the 156-residue chain is Cyclin-dependent protein kinase inhibitor SMR10 (156 aa).

Positions 52-90 are disordered; the sequence is QDQDLEPKSQETNNCSRKEGATVKKEEEEEDDYCKTPTR. Positions 67–77 are enriched in basic and acidic residues; that stretch reads SRKEGATVKKE.

Probable cyclin-dependent protein kinase (CDK) inhibitor that functions as a repressor of mitosis in the endoreduplication cell cycle. The sequence is that of Cyclin-dependent protein kinase inhibitor SMR10 from Arabidopsis thaliana (Mouse-ear cress).